A 278-amino-acid chain; its full sequence is Small ribosomal subunit protein uS3 (278 aa).

The KH type-2 domain maps to 39 to 107 (LRKAISKKYV…KVQLNIVEIS (69 aa)). Positions 255 to 278 (AEIPAEEKPKRVVKKAENITKEEE) are disordered.

Belongs to the universal ribosomal protein uS3 family. In terms of assembly, part of the 30S ribosomal subunit. Forms a tight complex with proteins S10 and S14.

Its function is as follows. Binds the lower part of the 30S subunit head. Binds mRNA in the 70S ribosome, positioning it for translation. This is Small ribosomal subunit protein uS3 from Dehalococcoides mccartyi (strain CBDB1).